The primary structure comprises 308 residues: MLNSNKFKSKTGAYGDLFQRVVVHSLVLTFLVLLLYSSLFPLTSFALGFITATCGAVGTYEYSSMAKAKMHYPLSTFSAIGSFLFLALSFLSIRWGHSLPGFFDALPWTLLIVWVVWSIFRVRKSTIGALQLSGVTLFSILYVGIPIRLFLHVLYSFIHTQEPYLGIWWASFLIATTKGADIFGYFFGKAFGNKKIAPQISPNKTVVGFVAGCLGATLISFIFFLQIPTRFASYFPMPAILIPLGLALGITGFFGDIIESIFKRDAHLKNSNKLKAVGGMLDTLDSLLLSTPIAYLFLLITQSKEFIG.

8 helical membrane-spanning segments follow: residues phenylalanine 30–isoleucine 50, proline 73–isoleucine 93, proline 100–phenylalanine 120, isoleucine 127–isoleucine 147, isoleucine 167–phenylalanine 187, threonine 205–leucine 225, phenylalanine 235–glycine 255, and methionine 280–isoleucine 300.

Belongs to the CDS family.

The protein resides in the cell membrane. The enzyme catalyses a 1,2-diacyl-sn-glycero-3-phosphate + CTP + H(+) = a CDP-1,2-diacyl-sn-glycerol + diphosphate. It functions in the pathway phospholipid metabolism; CDP-diacylglycerol biosynthesis; CDP-diacylglycerol from sn-glycerol 3-phosphate: step 3/3. The sequence is that of Phosphatidate cytidylyltransferase (cdsA) from Chlamydia pneumoniae (Chlamydophila pneumoniae).